A 190-amino-acid polypeptide reads, in one-letter code: Protein A52 (190 aa).

Belongs to the orthopoxvirus A52R protein family. Interacts with host TRAF6 and IRAK2.

Its function is as follows. Bcl-2-like protein which targets host toll-like receptor signaling complexes to suppress innate immune response. Interacts with host TRAF6 to activate p38 and subsequently induce the expression of several cytokines such as IL-10. Also associates with host IRAK2 to inhibit NF-kappa-B signaling. The polypeptide is Protein A52 (Vaccinia virus (strain Western Reserve) (VACV)).